Consider the following 669-residue polypeptide: Probable L-type lectin-domain containing receptor kinase I.2 (669 aa).

Positions 1-24 (MAQRFYLLLLLLIFLVNLICFSSQ) are cleaved as a signal peptide. The Extracellular segment spans residues 25–295 (QDLSFVFNGF…FTEQKRKRSP (271 aa)). The segment at 26–266 (DLSFVFNGFN…NQYILGWSFS (241 aa)) is legume-lectin like. N-linked (GlcNAc...) asparagine glycans are attached at residues Asn132, Asn189, Asn212, and Asn233. Residues 296–316 (LLIVLLVILTLVVIGGLGGYY) traverse the membrane as a helical segment. Topologically, residues 317 to 669 (LYRRKKYAEV…SHTILNGDGR (353 aa)) are cytoplasmic. Residues 351 to 609 (FNKDGRLGKG…MQYINRDQAL (259 aa)) enclose the Protein kinase domain. ATP-binding positions include 357 to 365 (LGKGGFGEV) and Lys379. The active-site Proton acceptor is the Asp475.

In the C-terminal section; belongs to the protein kinase superfamily. Ser/Thr protein kinase family. The protein in the N-terminal section; belongs to the leguminous lectin family.

Its subcellular location is the cell membrane. The catalysed reaction is L-seryl-[protein] + ATP = O-phospho-L-seryl-[protein] + ADP + H(+). The enzyme catalyses L-threonyl-[protein] + ATP = O-phospho-L-threonyl-[protein] + ADP + H(+). Involved in resistance response to the pathogenic fungus Alternaria brassicicola. This Arabidopsis thaliana (Mouse-ear cress) protein is Probable L-type lectin-domain containing receptor kinase I.2.